The sequence spans 316 residues: Transaldolase (316 aa).

The active-site Schiff-base intermediate with substrate is Lys125.

Belongs to the transaldolase family. Type 1 subfamily. Homodimer.

It is found in the cytoplasm. It catalyses the reaction D-sedoheptulose 7-phosphate + D-glyceraldehyde 3-phosphate = D-erythrose 4-phosphate + beta-D-fructose 6-phosphate. It participates in carbohydrate degradation; pentose phosphate pathway; D-glyceraldehyde 3-phosphate and beta-D-fructose 6-phosphate from D-ribose 5-phosphate and D-xylulose 5-phosphate (non-oxidative stage): step 2/3. Its function is as follows. Transaldolase is important for the balance of metabolites in the pentose-phosphate pathway. This Acidovorax ebreus (strain TPSY) (Diaphorobacter sp. (strain TPSY)) protein is Transaldolase.